Reading from the N-terminus, the 155-residue chain is Ribosomal RNA large subunit methyltransferase H (155 aa).

Residues L73, G104, and 123–128 contribute to the S-adenosyl-L-methionine site; that span reads LSPLTL.

Belongs to the RNA methyltransferase RlmH family. Homodimer.

Its subcellular location is the cytoplasm. It carries out the reaction pseudouridine(1915) in 23S rRNA + S-adenosyl-L-methionine = N(3)-methylpseudouridine(1915) in 23S rRNA + S-adenosyl-L-homocysteine + H(+). Functionally, specifically methylates the pseudouridine at position 1915 (m3Psi1915) in 23S rRNA. This is Ribosomal RNA large subunit methyltransferase H from Pseudomonas savastanoi pv. phaseolicola (strain 1448A / Race 6) (Pseudomonas syringae pv. phaseolicola (strain 1448A / Race 6)).